The sequence spans 1049 residues: Ataxin-2-like protein (1049 aa).

Met-1 is modified (N-acetylmethionine). The tract at residues 1 to 54 (MLKPQPPQQTSQPQQPPPTQQAVARRSPGGTSPPNGGLPGPLTATAAPPGPPAA) is disordered. Position 27 is a phosphoserine (Ser-27). Thr-45 carries the phosphothreonine modification. An interaction with MPL region spans residues 96–119 (SVRGQTTGKGPPQSPVFEGVYNNS). At Ser-109 the chain carries Phosphoserine. Phosphotyrosine is present on Tyr-116. Residues 120-197 (RMLHFLTAVV…VLLVHFRNVD (78 aa)) enclose the Sm domain. The residue at position 205 (Lys-205) is an N6-acetyllysine. Ser-236 is subject to Phosphoserine. Tyr-262 is modified (phosphotyrosine). A Phosphoserine modification is found at Ser-304. Tyr-307 is modified (phosphotyrosine). Residues 314–326 (ENDDGRTEEEKHS) show a composition bias toward basic and acidic residues. Disordered regions lie at residues 314 to 522 (ENDD…RNLE), 554 to 573 (QFKL…FPSR), 578 to 704 (EAKG…LTAG), 736 to 772 (VSNS…PMMQ), 824 to 852 (SNPR…AEQP), 868 to 944 (HATQ…SSFP), and 999 to 1049 (PQGH…PPGN). Residues 328 to 340 (VQRQGSGRESPSL) show a composition bias toward polar residues. Phosphoserine occurs at positions 333 and 337. Residue Lys-346 forms a Glycyl lysine isopeptide (Lys-Gly) (interchain with G-Cter in SUMO2) linkage. Tyr-347 carries the phosphotyrosine modification. Arg-359 bears the Asymmetric dimethylarginine mark. Residues 361–378 (GVRCSSSRGGRPGLSSLP) show a composition bias toward low complexity. A phosphoserine mark is found at Ser-389, Ser-407, and Ser-453. Low complexity predominate over residues 454-466 (PKSAAPAPVSASC). Positions 475–487 (VASSASIPVTSSV) are enriched in polar residues. Phosphoserine is present on residues Ser-496 and Ser-499. A compositionally biased stretch (basic and acidic residues) spans 508 to 519 (DVKELPTKEPSR). Phosphoserine occurs at positions 560, 561, and 562. Over residues 578 to 587 (EAKGKEKEVD) the composition is skewed to basic and acidic residues. A Phosphoserine modification is found at Ser-597. Thr-635 carries the post-translational modification Phosphothreonine. Residues Ser-637, Ser-677, Ser-683, and Ser-687 each carry the phosphoserine modification. A compositionally biased stretch (low complexity) spans 681–697 (STSTPTSPGPRTHSTPS). 2 stretches are compositionally biased toward polar residues: residues 824-845 (SNPR…STPQ) and 878-902 (QPAT…QHQA). Over residues 935–944 (SAQSPQSSFP) the composition is skewed to low complexity. A compositionally biased stretch (polar residues) spans 1033 to 1042 (QVQSHPSQQL).

Belongs to the ataxin-2 family. Interacts with MPL/TPOR and EPOR and dissociates after ligand stimulation. Interacts with DDX6, G3BP, and ATXN2. Interacts with PRMT1. Interacts with CIC and ATXN1. In terms of processing, thrombopoietin triggers the phosphorylation on tyrosine residues in a way that is dependent on MPL C-terminal domain. Asymmetrically dimethylated. Probably methylated by PRMT1. As to expression, expressed in cerebellum.

The protein resides in the membrane. It localises to the cytoplasm. The protein localises to the nucleus speckle. It is found in the cytoplasmic granule. Its function is as follows. Involved in the regulation of stress granule and P-body formation. In Mus musculus (Mouse), this protein is Ataxin-2-like protein (Atxn2l).